A 113-amino-acid polypeptide reads, in one-letter code: Regulator of rDNA transcription protein 7 (113 aa).

2 helical membrane-spanning segments follow: residues 13–35 and 70–92; these read FLPI…LFYN and FLLG…LLFL.

It localises to the membrane. Identified in a screen for mutants with decreased levels of rDNA transcription. The chain is Regulator of rDNA transcription protein 7 (RRT7) from Saccharomyces cerevisiae (strain ATCC 204508 / S288c) (Baker's yeast).